A 249-amino-acid chain; its full sequence is MNKKNQWIVGINAVVSSIENDAEHVCEVLVEAGSKNSRLLDIEENARRKGIEVRRVTTQALDGVGGGVRHQGVAARYAAVRLWEEHDLKDLVDAAGGQALLLVLDGVQDPHNLGACLRSAAAAGVTAVIIPKDKSVGINATVRKTSSGAADRLPVIAVVNLARSLRELQKQDVWIYGLEGEAETSLYALDLRGKVALVLGGEADGLRRLTREHCDVLARIPMPGEVESLNVSVAAGVTLFEAVRQRTLV.

Residues glycine 200, isoleucine 220, and leucine 229 each coordinate S-adenosyl-L-methionine.

It belongs to the class IV-like SAM-binding methyltransferase superfamily. RNA methyltransferase TrmH family. RlmB subfamily.

The protein resides in the cytoplasm. It carries out the reaction guanosine(2251) in 23S rRNA + S-adenosyl-L-methionine = 2'-O-methylguanosine(2251) in 23S rRNA + S-adenosyl-L-homocysteine + H(+). Specifically methylates the ribose of guanosine 2251 in 23S rRNA. The chain is 23S rRNA (guanosine-2'-O-)-methyltransferase RlmB from Xylella fastidiosa (strain 9a5c).